The sequence spans 475 residues: Ribulose bisphosphate carboxylase large chain (475 aa).

A propeptide spanning residues 1-2 (MS) is cleaved from the precursor. Position 3 is an N-acetylproline (Pro3). Position 14 is an N6,N6,N6-trimethyllysine (Lys14). 2 residues coordinate substrate: Asn123 and Thr173. Residue Lys175 is the Proton acceptor of the active site. Position 177 (Lys177) interacts with substrate. Residues Lys201, Asp203, and Glu204 each contribute to the Mg(2+) site. N6-carboxylysine is present on Lys201. His294 (proton acceptor) is an active-site residue. Substrate is bound by residues Arg295, His327, and Ser379.

This sequence belongs to the RuBisCO large chain family. Type I subfamily. As to quaternary structure, heterohexadecamer of 8 large chains and 8 small chains; disulfide-linked. The disulfide link is formed within the large subunit homodimers. The cofactor is Mg(2+). The disulfide bond which can form in the large chain dimeric partners within the hexadecamer appears to be associated with oxidative stress and protein turnover.

Its subcellular location is the plastid. It localises to the chloroplast. The catalysed reaction is 2 (2R)-3-phosphoglycerate + 2 H(+) = D-ribulose 1,5-bisphosphate + CO2 + H2O. It carries out the reaction D-ribulose 1,5-bisphosphate + O2 = 2-phosphoglycolate + (2R)-3-phosphoglycerate + 2 H(+). Its function is as follows. RuBisCO catalyzes two reactions: the carboxylation of D-ribulose 1,5-bisphosphate, the primary event in carbon dioxide fixation, as well as the oxidative fragmentation of the pentose substrate in the photorespiration process. Both reactions occur simultaneously and in competition at the same active site. The sequence is that of Ribulose bisphosphate carboxylase large chain from Magnolia acuminata (Cucumber tree).